We begin with the raw amino-acid sequence, 515 residues long: Protein disulfide-isomerase (515 aa).

An N-terminal signal peptide occupies residues 1 to 20 (MRTFAPWILSLLGASAVASA). Thioredoxin domains follow at residues 21 to 136 (ADAT…QSLP) and 343 to 470 (VLDD…ENGK). Catalysis depends on nucleophile residues Cys-58, Cys-61, Cys-393, and Cys-396. Cystine bridges form between Cys-58-Cys-61 and Cys-393-Cys-396. Composition is skewed to basic and acidic residues over residues 472 to 496 (KVDALEVDPKKEQESGDATETRAAS) and 506 to 515 (SDDKSEHDEL). Residues 472-515 (KVDALEVDPKKEQESGDATETRAASDETETPAATSDDKSEHDEL) are disordered. The Prevents secretion from ER signature appears at 512–515 (HDEL).

It belongs to the protein disulfide isomerase family.

The protein resides in the endoplasmic reticulum lumen. The enzyme catalyses Catalyzes the rearrangement of -S-S- bonds in proteins.. In terms of biological role, participates in the folding of proteins containing disulfide bonds, may be involved in glycosylation, prolyl hydroxylation and triglyceride transfer. In Aspergillus oryzae (strain ATCC 42149 / RIB 40) (Yellow koji mold), this protein is Protein disulfide-isomerase (pdiA).